Here is a 183-residue protein sequence, read N- to C-terminus: A-type ATP synthase subunit E (183 aa).

Belongs to the V-ATPase E subunit family. In terms of assembly, has multiple subunits with at least A(3), B(3), C, D, E, F, H, I and proteolipid K(x).

The protein resides in the cell membrane. Component of the A-type ATP synthase that produces ATP from ADP in the presence of a proton gradient across the membrane. This Methanosarcina acetivorans (strain ATCC 35395 / DSM 2834 / JCM 12185 / C2A) protein is A-type ATP synthase subunit E.